The sequence spans 151 residues: Protein Turandot Z (151 aa).

A signal peptide spans 1–23 (MSRLIHLSFVLALLACLTGPISA).

The protein belongs to the Turandot family.

Its subcellular location is the secreted. In terms of biological role, a humoral factor that may play a role in stress tolerance. The polypeptide is Protein Turandot Z (Drosophila pseudoobscura pseudoobscura (Fruit fly)).